The primary structure comprises 833 residues: ERAD-associated E3 ubiquitin-protein ligase component HRD3 (833 aa).

Residues Met-1–Ala-20 form the signal peptide. N-linked (GlcNAc...) asparagine glycosylation is found at Asn-101, Asn-123, and Asn-142. Residues Ser-103 to His-139 form a Sel1-like 1 repeat. Sel1-like repeat units lie at residues His-143 to Asn-186, Leu-187 to Arg-222, Gly-413 to Ala-445, Glu-552 to Asn-595, Ile-596 to Ser-627, and Ile-628 to His-663. The N-linked (GlcNAc...) asparagine glycan is linked to Asn-429. A glycan (N-linked (GlcNAc...) asparagine) is linked at Asn-611. The chain crosses the membrane as a helical span at residues Leu-768–Ala-788. Residues Asn-805–Trp-824 form a disordered region. The segment covering Gln-809–Gln-819 has biased composition (low complexity).

Belongs to the sel-1 family. As to quaternary structure, component of the HRD1 ubiquitin ligase complex which contains the E3 ligase HRD1, its cofactors HRD3, USA1 and DER1, substrate recruiting factor YOS9 and CDC48-binding protein UBX2. Within the complex, interacts directly with HRD1 and YOS9 (via N-terminus). In ERAD-L, HRD3 and YOS9 jointly bind misfolded glycoproteins in the endoplasmic reticulum (ER) lumen. Movement of ERAD-L substrates through the ER membrane is facilitated by HRD1 and DER1 which have lateral gates facing each other and which distort the membrane region between the lateral gates, making it much thinner than a normal phospholipid bilayer. Substrates insert into the membrane as a hairpin loop with one strand interacting with DER1 and the other with HRD1. The HRD1 complex interacts with the heterotrimeric CDC48-NPL4-UFD1 ATPase complex which is recruited by UBX2 via its interaction with CDC48 and which moves ubiquitinated substrates to the cytosol for targeting to the proteasome. The HRD1 complex interacts with the ERAD substrates HMG1 and HMG2. Interacts with KAR2.

Its subcellular location is the endoplasmic reticulum membrane. Its function is as follows. Component of the endoplasmic reticulum quality control (ERQC) system involved in ubiquitin-dependent degradation of misfolded endoplasmic reticulum proteins. Component of the HRD1 ubiquitin ligase complex, which is part of the ERAD-L and ERAD-M pathways responsible for the rapid degradation of soluble lumenal and membrane proteins with misfolded lumenal domains (ERAD-L), or ER-membrane proteins with misfolded transmembrane domains (ERAD-M). ERAD-L substrates are ubiquitinated through HRD1 in conjunction with the E2 ubiquitin-conjugating enzymes UBC1 and UBC7-CUE1. Ubiquitinated substrates are then removed to the cytosol via the action of the CDC48-NPL4-UFD1 ATPase complex and targeted to the proteasome. ERAD-M substrates are processed by the same HRD1-HRD3 core complex, but only a subset of the other components is required for ERAD-M. Stabilizes the HRD1 ubiquitin-protein ligase. Also functions in recruiting misfolded protein substrates in conjunction with YOS9. The polypeptide is ERAD-associated E3 ubiquitin-protein ligase component HRD3 (HRD3) (Saccharomyces cerevisiae (strain ATCC 204508 / S288c) (Baker's yeast)).